Here is a 195-residue protein sequence, read N- to C-terminus: Putative NADH dehydrogenase/NAD(P)H nitroreductase CC_0061 (195 aa).

The protein belongs to the nitroreductase family. HadB/RutE subfamily. FMN is required as a cofactor.

The polypeptide is Putative NADH dehydrogenase/NAD(P)H nitroreductase CC_0061 (Caulobacter vibrioides (strain ATCC 19089 / CIP 103742 / CB 15) (Caulobacter crescentus)).